Here is a 451-residue protein sequence, read N- to C-terminus: Opioid growth factor receptor-like protein 1 (451 aa).

Disordered regions lie at residues 1–89 (MGNL…TAKP) and 308–451 (ENFI…VLVQ). Residues 43–66 (PGQESEQPAQPPEQAGGRPGASPA) show a composition bias toward low complexity. Residues 322–341 (GSKAQKMSSPLASSHNSQTS) show a composition bias toward polar residues. 2 stretches are compositionally biased toward basic and acidic residues: residues 362–381 (TAED…DRPS) and 389–399 (AKPRNTEKDSN). Positions 431-443 (NDNQDNENPGNTN) are enriched in low complexity.

This sequence belongs to the opioid growth factor receptor family. As to expression, ubiquitous.

This chain is Opioid growth factor receptor-like protein 1 (OGFRL1), found in Homo sapiens (Human).